A 412-amino-acid polypeptide reads, in one-letter code: Circumsporozoite protein (412 aa).

An N-terminal signal peptide occupies residues 1–18 (MMRKLAILSVSSFLFVEA). Positions 69-328 (SRSLGENDDG…KNNNNEEPSD (260 aa)) are disordered. The segment covering 85–105 (NGREGKDEDKRDGNNEDNEKL) has biased composition (basic and acidic residues). The segment at 104–111 (KLRKPKHK) is required for the binding to heparan sulfate proteoglycans (HSPGs) on the surface of host hepatocytes. The interval 112-116 (KLKQP) is region I; contains the proteolytic cleavage site. Residues 120–288 (NPDPNANPNV…PNANPNANPN (169 aa)) are compositionally biased toward low complexity. Repeat copies occupy residues 123 to 126 (PNAN), 127 to 130 (PNVD), 131 to 134 (PNAN), 135 to 138 (PNVD), 139 to 142 (PNAN), 143 to 146 (PNVD), 147 to 150 (PNAN), 151 to 154 (PNAN), 155 to 158 (PNAN), 159 to 162 (PNAN), 163 to 166 (PNAN), 167 to 170 (PNAN), 171 to 174 (PNAN), 175 to 178 (PNAN), 179 to 182 (PNAN), 183 to 186 (PNAN), 187 to 190 (PNAN), 191 to 194 (PNAN), 195 to 198 (PNAN), 199 to 202 (PNAN), 203 to 206 (PNAN), 207 to 210 (PNVD), 211 to 214 (PNAN), 215 to 218 (PNAN), 219 to 222 (PNAN), 223 to 226 (PNAN), 227 to 230 (PNAN), 231 to 234 (PNAN), 235 to 238 (PNAN), 239 to 242 (PNAN), 243 to 246 (PNAN), 247 to 250 (PNAN), 251 to 254 (PNAN), 255 to 258 (PNAN), 259 to 262 (PNAN), 263 to 266 (PNAN), 267 to 270 (PNAN), 271 to 274 (PNAN), 275 to 278 (PNAN), 279 to 282 (PNAN), and 283 to 286 (PNAN). Positions 123-286 (PNANPNVDPN…ANPNANPNAN (164 aa)) are 41 X 4 AA tandem repeats of P-N-[AV]-[ND]. The segment covering 289-304 (KNNQGNGQGHNMPNDP) has biased composition (polar residues). Residues 310-324 (ENANANNAVKNNNNE) are compositionally biased toward low complexity. A TSP type-1 domain is found at 337–390 (KIKNSISTEWSPCSVTCGNGIQVRIKPGSANKPKDELDYENDIEKKICKMEKCS). 2 disulfide bridges follow: Cys349/Cys384 and Cys353/Cys389. Thr352 carries O-linked (Fuc) threonine glycosylation. Cys389 carries the GPI-anchor amidated cysteine lipid modification. The propeptide at 390 to 412 (SSVFNVVNSSIGLIMVLSFLFLN) is removed in mature form.

It belongs to the plasmodium circumsporozoite protein family. In terms of processing, during host cell invasion, proteolytically cleaved at the cell membrane in the region I by a papain-like cysteine protease of parasite origin. Cleavage is triggered by the sporozoite contact with highly sulfated heparan sulfate proteoglycans (HSPGs) present on the host hepatocyte cell surface. Cleavage exposes the TSP type-1 (TSR) domain and is required for productive invasion of host hepatocytes but not for adhesion to the host cell membrane. Cleavage is dispensable for sporozoite development in the oocyst, motility and for traversal of host and vector cells. Post-translationally, O-glycosylated; maybe by POFUT2.

It localises to the cell membrane. The protein localises to the cytoplasm. Functionally, essential sporozoite protein. In the mosquito vector, required for sporozoite development in the oocyst, migration through the vector hemolymph and entry into the vector salivary glands. In the vertebrate host, required for sporozoite migration through the host dermis and infection of host hepatocytes. Binds to highly sulfated heparan sulfate proteoglycans (HSPGs) on the surface of host hepatocytes. Its function is as follows. In the vertebrate host, binds to highly sulfated heparan sulfate proteoglycans (HSPGs) on the surface of host hepatocytes and is required for sporozoite invasion of the host hepatocytes. In Plasmodium falciparum, this protein is Circumsporozoite protein.